Consider the following 514-residue polypeptide: Serine/threonine-protein kinase 33 (514 aa).

The span at 65–86 (INRDITSRKDLPSRTSNVERKA) shows a compositional bias: basic and acidic residues. The disordered stretch occupies residues 65-91 (INRDITSRKDLPSRTSNVERKASQQQW). A Protein kinase domain is found at 116-381 (YTFGRILGKG…AKELLDNQWL (266 aa)). Residues 122-130 (LGKGSFGIV) and lysine 145 each bind ATP. Aspartate 238 serves as the catalytic Proton acceptor. Disordered stretches follow at residues 402-468 (KNNP…DMCS) and 485-514 (MEKT…KKKL). Serine 407 is modified (phosphoserine). Residues 413–426 (TEEKNKPSTEEKLK) show a composition bias toward basic and acidic residues. Polar residues predominate over residues 449–468 (STAYEKQFPATSKDNFDMCS).

Belongs to the protein kinase superfamily. CAMK Ser/Thr protein kinase family. CaMK subfamily. As to quaternary structure, homodimer. Autophosphorylated. Highly expressed in testis, fetal lung and heart, followed by pituitary gland, kidney, interventricular septum, pancreas, heart, trachea, thyroid gland and uterus. Weak hybridization signals were observed in the following tissues: amygdala, aorta, esophagus, colon ascending, colon transverse, skeletal muscle, spleen, peripheral blood leukocyte, lymph node, bone marrow, placenta, prostate, liver, salivary gland, mammary gland, some tumor cell lines, fetal brain, fetal liver, fetal spleen and fetal thymus. No signal at all was detectable in RNA from tissues of the nervous system.

The protein resides in the cytoplasm. Its subcellular location is the cytoskeleton. It is found in the perinuclear region. The enzyme catalyses L-seryl-[protein] + ATP = O-phospho-L-seryl-[protein] + ADP + H(+). It carries out the reaction L-threonyl-[protein] + ATP = O-phospho-L-threonyl-[protein] + ADP + H(+). With respect to regulation, specifically inhibited by CDD-2807 ((3-([1,1'-Biphenyl]-2-ylethynyl)-1H-indazol-5-yl)(2,6-diazaspiro[3.5]nonan-2-yl)methanone). In terms of biological role, serine/threonine protein kinase required for spermatid differentiation and male fertility. Promotes sperm flagella assembly during spermatogenesis by mediating phosphorylation of fibrous sheath proteins AKAP3 and AKAP4. Also phosphorylates vimentin/VIM, thereby regulating the dynamic behavior of the intermediate filament cytoskeleton. The protein is Serine/threonine-protein kinase 33 of Homo sapiens (Human).